The chain runs to 406 residues: MVAENQPGHIDQIKQTNAGAVYRLIDQLGPVSRIDLSRLAQLAPASITKIVREMLEAHLVQELEIKEAGNRGRPAVGLVVETEAWHYLSLRISRGEIFLALRDLSSKLVVEESQELALKDDLPLLDRIISHIDQFFIRHQKKLERLTSIAITLPGIIDTENGIVHRMPFYEDVKEMPLGEALEQHTGVPVYIQHDISAWTMAEALFGASRGARDVIQVVIDHNVGAGVITDGHLLHAGSSSLVEIGHTQVDPYGKRCYCGNHGCLETIASVDSILELAQLRLNQSMSSMLHGQPLTVDSLCQAALRGDLLAKDIITGVGAHVGRILAIMVNLFNPQKILIGSPLSKAADILFPVISDSIRQQALPAYSQHISVESTQFSNQGTMAGAALVKDAMYNGSLLIRLLQG.

The H-T-H motif DNA-binding region spans 33–42 (RIDLSRLAQL). H247, C257, C259, and C264 together coordinate Zn(2+).

The protein belongs to the ROK (NagC/XylR) family. In terms of assembly, homodimer. Homotetramer. There is probably an equilibrium between the dimeric and the tetrameric form. Interacts with dephosphorylated PtsG. Mlc and PtsG EIIB domain form a complex with the 1:1 stoichiometry. Interacts with MtfA.

Its subcellular location is the cytoplasm. With respect to regulation, activity is modulated by glucose. In the presence of glucose, is inhibited by interaction with the dephosphorylated form of PtsG, which sequesters Mlc in the inner membrane and prevents Mlc binding to its target promoters. The restriction of conformational freedom resulting from the anchoring of four ends of Mlc to the membrane could be the primary cause of its loss of DNA-binding activity in vivo. Activity is also inhibited by interaction with the Mlc titration factor A (mtfA). The inactivation mechanisms of Mlc by dephosphorylated PtsG and MtfA differ significantly. In terms of biological role, global regulator of carbohydrate metabolism. Represses the expression of several genes involved in sugar transport and utilization, in particular phosphoenolpyruvate-carbohydrate phosphotransferase system (PTS) genes. Represses expression of ptsG (EIICB(Glc)), which encodes the PTS system glucose-specific EIICB component. Also represses the expression of the manXYZ operon, encoding the mannose-specific PTS system, expression of malT, encoding the transcriptional activator of the maltose regulon, and expression of the pts operon, composed of the genes ptsH, ptsI and crr. Represses its own expression. Acts by binding to the regulatory region of the target genes. This chain is DNA-binding transcriptional repressor Mlc, found in Escherichia coli (strain K12).